A 417-amino-acid chain; its full sequence is Probable serine incorporator (417 aa).

A run of 10 helical transmembrane segments spans residues 25-45 (VYVV…YWTF), 69-89 (VVYR…LVMI), 104-124 (GYWP…FFIP), 131-151 (YTWI…VLLI), 180-200 (CVLS…MLVF), 208-228 (INQF…VLSI), 239-259 (SGLF…YSAI), 276-296 (KEST…YSAF), 339-359 (FFHF…TNWA), and 391-411 (VVSS…PILL).

This sequence belongs to the TDE1 family.

Its subcellular location is the endoplasmic reticulum membrane. In terms of biological role, enhances the incorporation of serine into phosphatidylserine and sphingolipids. This is Probable serine incorporator (serinc) from Dictyostelium discoideum (Social amoeba).